We begin with the raw amino-acid sequence, 310 residues long: Putative S-adenosyl-L-methionine-dependent methyltransferase Franean1_4929 (310 aa).

The tract at residues 1–28 (MSRPSAPRGRTELRSIHERGHERGSAGV) is disordered. Residues 9–24 (GRTELRSIHERGHERG) show a composition bias toward basic and acidic residues. S-adenosyl-L-methionine-binding positions include aspartate 136 and 165–166 (DL).

This sequence belongs to the UPF0677 family.

Functionally, exhibits S-adenosyl-L-methionine-dependent methyltransferase activity. This is Putative S-adenosyl-L-methionine-dependent methyltransferase Franean1_4929 from Parafrankia sp. (strain EAN1pec).